We begin with the raw amino-acid sequence, 871 residues long: Phosphoinositide 3-kinase regulatory subunit 5 (871 aa).

Residue M1 is modified to N-acetylmethionine. The interval 25 to 101 (SLGRRSAPWS…TPHFPPDSDL (77 aa)) is heterodimerization. The interval 381-413 (MDSGYVEDSEENSEWPQKPGSQKRQGHRRPGQK) is disordered. Phosphoserine is present on residues S451 and S500. The interval 646 to 746 (PILADMLLYY…WSNLEKVCTS (101 aa)) is interaction with beta-gamma G protein dimers.

As to quaternary structure, heterodimer of a catalytic subunit (PIK3CG/p120) and a regulatory (PIK3R5a/p101) subunit. Interacts with beta-gamma G protein dimers.

The protein localises to the nucleus. The protein resides in the cytoplasm. Its subcellular location is the cell membrane. Its activity is regulated as follows. Greatly activated by G gamma proteins. Regulatory subunit of the PI3K gamma complex. Required for recruitment of the catalytic subunit to the plasma membrane via interaction with beta-gamma G protein dimers. Required for G protein-mediated activation of PIK3CG. In Mus musculus (Mouse), this protein is Phosphoinositide 3-kinase regulatory subunit 5 (Pik3r5).